Consider the following 341-residue polypeptide: S-adenosylmethionine:tRNA ribosyltransferase-isomerase (341 aa).

It belongs to the QueA family. As to quaternary structure, monomer.

It localises to the cytoplasm. It catalyses the reaction 7-aminomethyl-7-carbaguanosine(34) in tRNA + S-adenosyl-L-methionine = epoxyqueuosine(34) in tRNA + adenine + L-methionine + 2 H(+). Its pathway is tRNA modification; tRNA-queuosine biosynthesis. Transfers and isomerizes the ribose moiety from AdoMet to the 7-aminomethyl group of 7-deazaguanine (preQ1-tRNA) to give epoxyqueuosine (oQ-tRNA). The chain is S-adenosylmethionine:tRNA ribosyltransferase-isomerase from Clostridium botulinum (strain Langeland / NCTC 10281 / Type F).